The primary structure comprises 942 residues: Calcium-activated chloride channel regulator 2 (942 aa).

The first 32 residues, 1–32 (MTHRDSTGPVIGLKLVTLLFTLSPELLFLGAG), serve as a signal peptide directing secretion. Topologically, residues 33–905 (LKLKENGYDG…SRDDLILKGV (873 aa)) are extracellular. The segment at 54–205 (DLKLITNIKE…CSSDITGVFV (152 aa)) is metalloprotease domain. Asparagine 74 and asparagine 97 each carry an N-linked (GlcNAc...) asparagine glycan. Zn(2+) is bound at residue histidine 164. The active site involves glutamate 165. Histidine 168 and aspartate 175 together coordinate Zn(2+). N-linked (GlcNAc...) asparagine glycans are attached at residues asparagine 231, asparagine 235, asparagine 254, and asparagine 286. Residues 311 to 483 (VVCLVIDVSR…NGMTEAFVRI (173 aa)) form the VWFA domain. 4 N-linked (GlcNAc...) asparagine glycosylation sites follow: asparagine 522, asparagine 580, asparagine 637, and asparagine 821. The chain crosses the membrane as a helical span at residues 906–926 (LTTVGLIAILCLIMVVAHCIF). Residues 927–942 (NRKKRPSRKENETKFL) are Cytoplasmic-facing.

Belongs to the CLCR family. Post-translationally, the translation product is autoproteolytically cleaved by the metalloprotease domain in the endoplasmic reticulum into a N-terminal and a C-terminal products that remain physically associated with each other. The cleavage is necessary for calcium-activated chloride channel (CaCC) activation activity. N-glycosylated. In terms of tissue distribution, highly expressed in eye, spleen, lung, kidney, uterus, and endothelial cells. Weakly expressed in heart and throughout the gastrointestinal tract. Highly expressed in mammary cell lines. Its expression in immortalized cell line HC11 correlates with slow or arrested growth. Re-expression in mammary tumor cells reduces colony survival.

The protein localises to the cell membrane. It localises to the basal cell membrane. It is found in the cell junction. Its function is as follows. Plays a role in modulating chloride current across the plasma membrane in a calcium-dependent manner, and cell adhesion. Involved in basal cell adhesion and/or stratification of squamous epithelia. May act as a tumor suppressor in breast and colorectal cancer. Plays a key role for cell adhesion in the beginning stages of lung metastasis via the binding to ITGB4. This chain is Calcium-activated chloride channel regulator 2 (Clca2), found in Mus musculus (Mouse).